Here is a 392-residue protein sequence, read N- to C-terminus: Alanine--glyoxylate aminotransferase (392 aa).

Residue threonine 9 is modified to Phosphothreonine. Lysine 209 carries the post-translational modification N6-(pyridoxal phosphate)lysine. Lysine 225 carries the N6-acetyllysine; alternate modification. Position 225 is an N6-succinyllysine; alternate (lysine 225). Lysine 234 and lysine 312 each carry N6-acetyllysine. Substrate is bound at residue arginine 360.

Belongs to the class-V pyridoxal-phosphate-dependent aminotransferase family. As to quaternary structure, homodimer. Pyridoxal 5'-phosphate serves as cofactor. As to expression, liver.

It localises to the peroxisome. The catalysed reaction is L-serine + pyruvate = 3-hydroxypyruvate + L-alanine. It catalyses the reaction glyoxylate + L-alanine = glycine + pyruvate. Alanine--glyoxylate aminotransferase activity is inhibited by 1 mM (aminooxy)acetic acid by 97.5%. In terms of biological role, peroxisomal aminotransferase that catalyzes the transamination of glyoxylate to glycine and contributes to the glyoxylate detoxification. Also catalyzes the transamination between L-serine and pyruvate and contributes to gluconeogenesis from the L-serine metabolism. In Homo sapiens (Human), this protein is Alanine--glyoxylate aminotransferase.